We begin with the raw amino-acid sequence, 353 residues long: tRNA N6-adenosine threonylcarbamoyltransferase (353 aa).

Residues His-119 and His-123 each contribute to the Fe cation site. Substrate is bound by residues 145–149 (LVSGG), Asp-178, Gly-191, and Asn-285. Position 313 (Asp-313) interacts with Fe cation.

Belongs to the KAE1 / TsaD family. Fe(2+) serves as cofactor.

The protein resides in the cytoplasm. It catalyses the reaction L-threonylcarbamoyladenylate + adenosine(37) in tRNA = N(6)-L-threonylcarbamoyladenosine(37) in tRNA + AMP + H(+). Functionally, required for the formation of a threonylcarbamoyl group on adenosine at position 37 (t(6)A37) in tRNAs that read codons beginning with adenine. Is involved in the transfer of the threonylcarbamoyl moiety of threonylcarbamoyl-AMP (TC-AMP) to the N6 group of A37, together with TsaE and TsaB. TsaD likely plays a direct catalytic role in this reaction. The chain is tRNA N6-adenosine threonylcarbamoyltransferase from Magnetococcus marinus (strain ATCC BAA-1437 / JCM 17883 / MC-1).